The following is a 130-amino-acid chain: Mini-ribonuclease 3 (130 aa).

Residue D19 is part of the active site. The interval 69-91 (EQDVVRRGRNAKGHGAPKSADPA) is disordered.

This sequence belongs to the MrnC RNase family. In terms of assembly, homodimer. Mg(2+) is required as a cofactor.

Its subcellular location is the cytoplasm. Its function is as follows. Involved in correct processing of both the 5' and 3' ends of 23S rRNA precursor. Processes 30S rRNA precursor transcript even in absence of ribonuclease 3 (Rnc); Rnc processes 30S rRNA into smaller rRNA precursors. The chain is Mini-ribonuclease 3 from Symbiobacterium thermophilum (strain DSM 24528 / JCM 14929 / IAM 14863 / T).